A 436-amino-acid chain; its full sequence is Probable mediator of RNA polymerase II transcription subunit 26b (436 aa).

Residues 71 to 111 form a disordered region; sequence PGDDEANRGTTGNGGGGTAVDEDYEVAGGSKESKANSSRGD. The region spanning 139–214 is the TFIIS N-terminal domain; the sequence is KEVARIKEIL…AEWKELVDQW (76 aa). A disordered region spans residues 263 to 376; sequence HFFDSLDFDG…PQQEKLKGLD (114 aa). Composition is skewed to basic and acidic residues over residues 276–290 and 332–350; these read NSEE…ERRP and TEQR…EKPM. Residues 382 to 402 adopt a coiled-coil conformation; it reads EFAKRKLQESYQHHENAKKQR. Residues 408–436 are disordered; sequence EMIPKQGSAQKPQLKRPGMSNRNWANGRK. Positions 427 to 436 are enriched in polar residues; the sequence is SNRNWANGRK.

The protein belongs to the Mediator complex subunit 26 family. As to quaternary structure, component of the Mediator complex.

Its subcellular location is the nucleus. In terms of biological role, component of the Mediator complex, a coactivator involved in the regulated transcription of nearly all RNA polymerase II-dependent genes. Mediator functions as a bridge to convey information from gene-specific regulatory proteins to the basal RNA polymerase II transcription machinery. The Mediator complex, having a compact conformation in its free form, is recruited to promoters by direct interactions with regulatory proteins and serves for the assembly of a functional preinitiation complex with RNA polymerase II and the general transcription factors. May play a role in transcription elongation. This chain is Probable mediator of RNA polymerase II transcription subunit 26b (MED26B), found in Arabidopsis thaliana (Mouse-ear cress).